A 1336-amino-acid polypeptide reads, in one-letter code: Aldehyde oxidase 4 (1336 aa).

The 2Fe-2S ferredoxin-type domain occupies 8–95 (DELIFFVNGK…GAAITTVEGV (88 aa)). Positions 47, 52, 55, and 77 each coordinate [2Fe-2S] cluster. Gln-116 contacts Mo-molybdopterin. [2Fe-2S] cluster contacts are provided by Cys-117, Cys-120, Cys-152, and Cys-154. Position 154 (Cys-154) interacts with Mo-molybdopterin. The FAD-binding PCMH-type domain occupies 237-423 (FQGKRTTWII…LSIFIPYTAQ (187 aa)). Residues 265-272 (LVMGNTTV), Ala-346, Thr-355, His-359, Asp-368, and Ile-413 contribute to the FAD site. Residues 804–805 (AF), Leu-1045, 1086–1089 (GSMG), Gln-1201, and Leu-1265 contribute to the Mo-molybdopterin site. Glu-1267 serves as the catalytic Proton acceptor; for azaheterocycle hydroxylase activity.

This sequence belongs to the xanthine dehydrogenase family. In terms of assembly, homodimer. The cofactor is [2Fe-2S] cluster. FAD is required as a cofactor. Mo-molybdopterin serves as cofactor. As to expression, highly expressed in Harderian glands and sebaceous glands with detectable levels in the epidermis and other keratinized epithelia (at protein level). Detected in testis. The expression is 3 times greater in females than in males.

The protein localises to the cytoplasm. It carries out the reaction an aldehyde + O2 + H2O = a carboxylate + H2O2 + H(+). The enzyme catalyses retinal + O2 + H2O = retinoate + H2O2 + H(+). The catalysed reaction is all-trans-retinal + O2 + H2O = all-trans-retinoate + H2O2 + H(+). Aldehyde oxidase able to catalyze the oxidation of retinaldehyde into retinoate. Is responsible for the major all-trans-retinaldehyde-metabolizing activity in the Harderian gland, and contributes a significant amount of the same activity in the skin. Is devoid of pyridoxal-oxidizing activity, in contrast to the other aldehyde oxidases. Acts as a negative modulator of the epidermal trophism. May be able to oxidize a wide variety of aldehydes into their corresponding carboxylates and to hydroxylate azaheterocycles. The protein is Aldehyde oxidase 4 (Aox4) of Mus musculus (Mouse).